Consider the following 1473-residue polypeptide: MATKLPLQNSNAANVAKAPAKSRAAAGGKTIEEMYQKKSQLEHILLRPDTYIGSIEKHTQTLWVYEKDEMVQRPVTYVPGLYKIFDEILVNAADNKQRDAKMDSVQVVIDVEQNLISVCNSGAGVPVEIHQEEGIYVPEMIFGHLLTSSNYDDNVKKTTGGRNGYGAKLTNIFSTEFIIETADGKRLKKYKQVFENNMGKKSEPVITKCNKSENWTKVTFKPDLKKFNMTELEDDVVALMSKRVFDIAGCLGKSVKVELNGKQIPVKSFTDYVDLYLSAANKSRTEDPLPRLTEKVNDRWEVCVSLSEGQFQQVSFVNSIATIKGGTHVDYVTSQITNHIVAAVNKKNKNANVKAHNVKNHLWVFVNALIDNPAFDSQTKETLTLRQSSFGSKCELSEDFLKKVGKSGVVENLLSWADFKQNKDLKKSDGAKTGRVLVEKLDDAAEAGGKNSRLCTLILTEGDSAKSLALAGRSVLGNNYCGVFPLRGKLLNVREASTTQITNNKEIENLKKILGLKQNMKYENVNSLRYGQMMIMTDQDHDGSHIKGLLINFIHSFWPSLLQVPSFLVEFITPIVKATRKGTKKVLSFYSMPEYEEWKESLKGNATGWDIKYYKGLGTSTAEEGKEYFSNLGLHKKDFVWEDEQDGEAIELAFSKKKIEARKNWLSSYVPGNHLDQRQPKVTYSDFVNKELILFSMADLQRSIPSMVDGLKPGQRKILFVAFKKIARKEMKVAQLVGYVSLLSAYHHGEQSLASAIIGMAQDYVGSNNINLLLPNGQFGTRTSGGKDSASARYIFTKLSPVTRILFPKDDDLLLDYLNEDGQRIEPTWYMPIIPTVLVNGAEGIGTGWSTFIPNYNPREIVANVRRLLNGESMVPMDPWYRGFKGTIEKTASKEGGCTYTITGLYEEVDETTIRITELPIRRWNDDYKNFLQSLKTDNGAPFFQDVKAYNDEKSVDFDLILSEENMLAARQEGFLKKFKLTTTIATSNMHLFDKKGVIKKYVTPEQILEEFFDLRFEYYEKRKETVVKNMEIELLKLENKARFILAVLSGEIIVNKRKKADIVEDLRQKGFTPFPRKAESVEAAIAGAVDDDAAEEPEEILVDPESSSSYIPGSEYDYLLAMAIASLTIEKVEELLADRDKMIIAVADMKKTTPKSLWLSDLESLDKELEKLDLKDAQVQQAIEAAQKKIRAKSGAAVKVKRQAPKKPAPKKTTKKASESETTEASYSAMDTDNNVAEVVKPKARQGAKKKASESETTEASHSAMDTDNNVAEVVKPKGRQGAKKKAPAAAKEVEEDEMLDLAQRLAQYNFGSAPADSSKTAETSKAIAVDDDDDDVVVEVAPVKKGGRKPAATKAAKPPAAPRKRGKQTVASTEVLAIGVSPEKKVRKMRSSPFNKKSSSVMSRLADNKEEESSENVAGNSSSEKSGGDVSAISRPQRANRRKMTYVLSDSESESANDSEFDDIEDDEDDE.

The segment at 1-20 is disordered; sequence MATKLPLQNSNAANVAKAPA. Residues 9–20 show a composition bias toward low complexity; the sequence is NSNAANVAKAPA. ATP-binding positions include Asn-91, Asn-120, 148 to 150, and 161 to 168; these read SSN and GRNGYGAK. The interval 345–347 is interaction with DNA; the sequence is NKK. 378-380 is a binding site for ATP; that stretch reads QTK. Positions 455 to 569 constitute a Toprim domain; the sequence is CTLILTEGDS…SLLQVPSFLV (115 aa). Residues Glu-461, Asp-538, and Asp-540 each coordinate Mg(2+). In terms of domain architecture, Topo IIA-type catalytic spans 704–1163; that stretch reads IPSMVDGLKP…TPKSLWLSDL (460 aa). Tyr-794 functions as the O-(5'-phospho-DNA)-tyrosine intermediate in the catalytic mechanism. The interval 980-989 is interaction with DNA; that stretch reads KLTTTIATSN. 3 disordered regions span residues 1195–1230, 1242–1297, and 1313–1473; these read SGAA…SYSA, KPKA…EVEE, and GSAP…EDDE. Basic residues-rich tracts occupy residues 1200–1216 and 1278–1288; these read KVKR…KTTK and PKGRQGAKKKA. Residues 1351–1360 are compositionally biased toward low complexity; it reads KPAATKAAKP. 2 stretches are compositionally biased toward polar residues: residues 1394-1404 and 1417-1427; these read SPFNKKSSSVM and ENVAGNSSSEK. The segment covering 1453–1473 has biased composition (acidic residues); that stretch reads SESESANDSEFDDIEDDEDDE.

The protein belongs to the type II topoisomerase family. As to quaternary structure, homodimer. Requires Mg(2+) as cofactor. Mn(2+) serves as cofactor. The cofactor is Ca(2+).

The catalysed reaction is ATP-dependent breakage, passage and rejoining of double-stranded DNA.. Control of topological states of DNA by transient breakage and subsequent rejoining of DNA strands. Topoisomerase II makes double-strand breaks. The protein is DNA topoisomerase 2 (TOP2) of Arabidopsis thaliana (Mouse-ear cress).